A 227-amino-acid polypeptide reads, in one-letter code: 6,7-dimethyl-8-ribityllumazine synthase, chloroplastic (227 aa).

The transit peptide at 1 to 71 directs the protein to the chloroplast; the sequence is MKSLASPPCL…LRSSFVQTAA (71 aa). 5-amino-6-(D-ribitylamino)uracil-binding positions include phenylalanine 94, 128–130, and 152–154; these read SFE and AVI. 157 to 158 contributes to the (2S)-2-hydroxy-3-oxobutyl phosphate binding site; that stretch reads DT. Histidine 160 functions as the Proton donor in the catalytic mechanism. Phenylalanine 185 is a binding site for 5-amino-6-(D-ribitylamino)uracil. Arginine 199 contributes to the (2S)-2-hydroxy-3-oxobutyl phosphate binding site.

The protein belongs to the DMRL synthase family. In terms of assembly, oligomer forming an icosahedral capsid.

The protein localises to the plastid. The protein resides in the chloroplast. It carries out the reaction (2S)-2-hydroxy-3-oxobutyl phosphate + 5-amino-6-(D-ribitylamino)uracil = 6,7-dimethyl-8-(1-D-ribityl)lumazine + phosphate + 2 H2O + H(+). It participates in cofactor biosynthesis; riboflavin biosynthesis; riboflavin from 2-hydroxy-3-oxobutyl phosphate and 5-amino-6-(D-ribitylamino)uracil: step 1/2. Catalyzes the formation of 6,7-dimethyl-8-ribityllumazine by condensation of 5-amino-6-(D-ribitylamino)uracil with 3,4-dihydroxy-2-butanone 4-phosphate. This is the penultimate step in the biosynthesis of riboflavin. This Arabidopsis thaliana (Mouse-ear cress) protein is 6,7-dimethyl-8-ribityllumazine synthase, chloroplastic.